The primary structure comprises 239 residues: DNA repair protein RecO (239 aa).

This sequence belongs to the RecO family.

In terms of biological role, involved in DNA repair and RecF pathway recombination. The chain is DNA repair protein RecO from Stenotrophomonas maltophilia (strain R551-3).